A 429-amino-acid chain; its full sequence is Aspartate--tRNA(Asp/Asn) ligase (429 aa).

E166 provides a ligand contact to L-aspartate. The aspartate stretch occupies residues 188 to 191 (QLYK). An L-aspartate-binding site is contributed by R210. ATP is bound by residues 210–212 (RAE), 218–220 (RHL), and E352. 2 residues coordinate Mg(2+): E352 and S355. L-aspartate contacts are provided by S355 and R359. 400–403 (GIER) serves as a coordination point for ATP.

Belongs to the class-II aminoacyl-tRNA synthetase family. Type 2 subfamily. In terms of assembly, homodimer. The cofactor is Mg(2+).

It localises to the cytoplasm. It catalyses the reaction tRNA(Asx) + L-aspartate + ATP = L-aspartyl-tRNA(Asx) + AMP + diphosphate. In terms of biological role, aspartyl-tRNA synthetase with relaxed tRNA specificity since it is able to aspartylate not only its cognate tRNA(Asp) but also tRNA(Asn). Reaction proceeds in two steps: L-aspartate is first activated by ATP to form Asp-AMP and then transferred to the acceptor end of tRNA(Asp/Asn). This Methanoculleus marisnigri (strain ATCC 35101 / DSM 1498 / JR1) protein is Aspartate--tRNA(Asp/Asn) ligase.